We begin with the raw amino-acid sequence, 312 residues long: HPr kinase/phosphorylase (312 aa).

Catalysis depends on residues His-139 and Lys-160. 154-161 (GDSGIGKS) lines the ATP pocket. Residue Ser-161 participates in Mg(2+) binding. The Proton acceptor; for phosphorylation activity. Proton donor; for dephosphorylation activity role is filled by Asp-178. Positions 202-211 (IEIRGVGIID) are important for the catalytic mechanism of both phosphorylation and dephosphorylation. Residue Glu-203 participates in Mg(2+) binding. Arg-244 is an active-site residue. Residues 265–270 (PVKTGR) form an important for the catalytic mechanism of dephosphorylation region.

This sequence belongs to the HPrK/P family. In terms of assembly, homohexamer. It depends on Mg(2+) as a cofactor.

The catalysed reaction is [HPr protein]-L-serine + ATP = [HPr protein]-O-phospho-L-serine + ADP + H(+). It catalyses the reaction [HPr protein]-O-phospho-L-serine + phosphate + H(+) = [HPr protein]-L-serine + diphosphate. In terms of biological role, catalyzes the ATP- as well as the pyrophosphate-dependent phosphorylation of a specific serine residue in HPr, a phosphocarrier protein of the phosphoenolpyruvate-dependent sugar phosphotransferase system (PTS). HprK/P also catalyzes the pyrophosphate-producing, inorganic phosphate-dependent dephosphorylation (phosphorolysis) of seryl-phosphorylated HPr (P-Ser-HPr). The two antagonistic activities of HprK/P are regulated by several intracellular metabolites, which change their concentration in response to the absence or presence of rapidly metabolisable carbon sources (glucose, fructose, etc.) in the growth medium. Therefore, by controlling the phosphorylation state of HPr, HPrK/P is a sensor enzyme that plays a major role in the regulation of carbon metabolism and sugar transport: it mediates carbon catabolite repression (CCR), and regulates PTS-catalyzed carbohydrate uptake and inducer exclusion. The polypeptide is HPr kinase/phosphorylase (Streptococcus pneumoniae serotype 4 (strain ATCC BAA-334 / TIGR4)).